Here is a 562-residue protein sequence, read N- to C-terminus: MAADAFLLIFGLLLTVLIVAQPLGSGLARLIEGETGTLLQKFETKTARFFALDTTEMRWQQYAAAILALNLIGIVVLFVLLMAQGNLPLNPENMPGLSWHLALNTAVSFVTNTNWQAYSGENTLSYLSQMVGLTVQNFLSAASGIAVAFALIRAFSRRCVDTLGNAWLDLLRITLYVLLPLSLLLALFFVSQGVLQNLLPYQHLTTLDGAAQTLPMGPVASQEAIKLLGTNGGGFFGANSAHPFENPTALSNIVQMLAILLIPTALCFAFGKAVSDKRQGHALLWAMALIFIVAAAVVMKMEVTGNPHLLALGADSAANLEGKETRFGVLTSSLYAVVTTATSTGAVNAMHDSFTALGGMVPLWLMQIGEVVFGGVGSGLYGMLLFVLLTVFIAGLMIGRSPEYLGKKIEVYEMKMTALAILIPPALVLLGTALALSTEAGRGGILNPGAHGFSEVLYAVSSAANNNGSAFAGLSVNTPFYNVLLAVAMLLGRFAVMVPVLAIAGSLVVKKRQPESKGSLSTRSPLFIGMLIAIVLLIGALTFIPALALGPVAEHLQFGLTH.

Transmembrane regions (helical) follow at residues 5–25, 63–83, 132–152, 175–195, 250–270, 279–299, 379–399, 416–436, 483–503, and 526–546; these read AFLL…PLGS, AAAI…LLMA, GLTV…FALI, LYVL…QGVL, LSNI…CFAF, QGHA…AVVM, GLYG…LMIG, MTAL…ALAL, VLLA…VLAI, and LFIG…FIPA.

It belongs to the KdpA family. In terms of assembly, the system is composed of three essential subunits: KdpA, KdpB and KdpC.

Its subcellular location is the cell inner membrane. Part of the high-affinity ATP-driven potassium transport (or Kdp) system, which catalyzes the hydrolysis of ATP coupled with the electrogenic transport of potassium into the cytoplasm. This subunit binds the periplasmic potassium ions and delivers the ions to the membrane domain of KdpB through an intramembrane tunnel. This chain is Potassium-transporting ATPase potassium-binding subunit, found in Pectobacterium atrosepticum (strain SCRI 1043 / ATCC BAA-672) (Erwinia carotovora subsp. atroseptica).